Here is a 1535-residue protein sequence, read N- to C-terminus: Lysine-specific demethylase 5D (1535 aa).

Residues 14–55 enclose the JmjN domain; it reads CPVFEPSWAEFQDPLGYIAKIRPIAEKSGICKIRPPADWQPP. An ARID domain is found at 79–169; it reads TRVKLNYLDQ…IIYPYEMFQS (91 aa). Residues 192–227 form a disordered region; it reads PHSIPLRQSVQPSKFSSYSRRAKRLQPDPEPTEEDI. Positions 197 to 210 are enriched in polar residues; it reads LRQSVQPSKFSSYS. Residues K205, K229, K244, and K272 each participate in a glycyl lysine isopeptide (Lys-Gly) (interchain with G-Cter in SUMO2) cross-link. 2 positions are modified to phosphoserine: S291 and S307. A PHD-type 1 zinc finger spans residues 314–364; it reads SYICQVCSRGDEDDKLLFCDGCDDNYHIFCLLPPLPEIPRGIWRCPKCILA. Y430 lines the 2-oxoglutarate pocket. The JmjC domain maps to 458–624; that stretch reads EYATSGWNLN…AGRQCIEHYR (167 aa). Fe cation is bound by residues H504 and E506. 2-oxoglutarate-binding residues include S512, N514, and K522. H592 serves as a coordination point for Fe cation. The segment at 697–749 adopts a C5HC2 zinc-finger fold; the sequence is CIKCKTTCFLSALACYDCPDGLVCLSHINDLCKCSSSRQYLRYRYTLDELPTM. The residue at position 884 (S884) is a Phosphoserine. The PHD-type 2 zinc finger occupies 1174 to 1235; it reads ICVCGQVPAG…DTKFLCPLCM (62 aa). Phosphoserine is present on S1342. A disordered region spans residues 1425-1519; the sequence is HQGSRTRSRA…KDSGSSAACP (95 aa). The segment covering 1428-1441 has biased composition (basic residues); it reads SRTRSRALERRRRQ. Over residues 1473–1487 the composition is skewed to basic and acidic residues; sequence GREEEHYQEKADREN. Residues 1490 to 1517 are compositionally biased toward polar residues; it reads LTPSTDHSPSLKGNQNSLQHKDSGSSAA.

It belongs to the JARID1 histone demethylase family. Interacts withPCGF6, MSH5, ZMYND8, AR. The cofactor is L-ascorbate. Fe(2+) serves as cofactor.

It is found in the nucleus. It catalyses the reaction N(6),N(6),N(6)-trimethyl-L-lysyl(4)-[histone H3] + 3 2-oxoglutarate + 3 O2 = L-lysyl(4)-[histone H3] + 3 formaldehyde + 3 succinate + 3 CO2. Histone demethylase that specifically demethylates 'Lys-4' of histone H3, thereby playing a central role in histone code. Does not demethylate histone H3 'Lys-9', H3 'Lys-27', H3 'Lys-36', H3 'Lys-79' or H4 'Lys-20'. Demethylates trimethylated and dimethylated but not monomethylated H3 'Lys-4'. May play a role in spermatogenesis. Involved in transcriptional repression of diverse metastasis-associated genes; in this function seems to cooperate with ZMYND8. Suppresses prostate cancer cell invasion. Regulates androgen receptor (AR) transcriptional activity by demethylating H3K4me3 active transcription marks. This chain is Lysine-specific demethylase 5D (KDM5D), found in Pan troglodytes (Chimpanzee).